Consider the following 153-residue polypeptide: Arginine repressor (153 aa).

This sequence belongs to the ArgR family.

Its subcellular location is the cytoplasm. It participates in amino-acid biosynthesis; L-arginine biosynthesis [regulation]. Its function is as follows. Regulates arginine biosynthesis genes. This chain is Arginine repressor, found in Clostridium tetani (strain Massachusetts / E88).